We begin with the raw amino-acid sequence, 237 residues long: BTB/POZ domain-containing protein KCTD6 (237 aa).

Residues 1–104 are interaction with ANK1 isoform Mu17; that stretch reads MDNGDWGYMM…FYQIEPLIQC (104 aa). Positions 10-110 are interaction with CUL3; that stretch reads MTDPVTLNVG…LIQCLNDPKP (101 aa). The 70-residue stretch at 12-81 folds into the BTB domain; it reads DPVTLNVGGH…LRTSELTLPL (70 aa). Residues 113-187 are interaction with USP21; it reads PMDTFEEVVE…TFGPCDYHQE (75 aa).

As to quaternary structure, homopentamer. Interacts with KCTD11; KCTD6 and KCTD11 may associate in pentameric assemblies. Interacts (via BTB domain) with CUL3; initially a 4:4 stoichiometry has been reported, however, electron microscopy revealed pentameric states with a five-pointed pinwheel shape. The interaction with CUL3 is indicative for a participation in a BCR (BTB-CUL3-RBX1) E3 ubiquitin-protein ligase complex. Interacts with HDAC1; probably indirect as the interaction is requires the presence of KCTD11. Interacts with USP21 (preferentially catalytic inactive form). Interacts with ANK1 isoform Mu17; detected in striated muscle. Interacts with USP11. Highly expressed in cerebellum and brain. Expression is down-regulated in medulloblastoma.

The protein localises to the cytoplasm. The protein resides in the myofibril. Its subcellular location is the sarcomere. It is found in the m line. The protein operates within protein modification; protein ubiquitination. Probable substrate-specific adapter of a BCR (BTB-CUL3-RBX1) E3 ubiquitin-protein ligase complex mediating the ubiquitination and subsequent proteasomal degradation of target proteins. Promotes the ubiquitination of HDAC1; the function seems to depend on KCTD11:KCTD6 oligomerization. Can function as antagonist of the Hedgehog pathway by affecting the nuclear transfer of transcription factor GLI1; the function probably occurs via HDAC1 down-regulation, keeping GLI1 acetylated and inactive. Inhibits cell growth and tumorigenicity of medulloblastoma (MDB). Involved in regulating protein levels of ANK1 isoform Mu17 probably implicating CUL3-dependent proteasomal degradation. This is BTB/POZ domain-containing protein KCTD6 (KCTD6) from Homo sapiens (Human).